A 428-amino-acid polypeptide reads, in one-letter code: GTPase Obg (428 aa).

In terms of domain architecture, Obg spans methionine 1 to leucine 158. A disordered region spans residues alanine 117 to proline 145. Residues alanine 159–glutamate 329 enclose the OBG-type G domain. Residues glycine 165–serine 172, phenylalanine 190–valine 194, aspartate 212–glycine 215, asparagine 282–aspartate 285, and serine 310–valine 312 each bind GTP. 2 residues coordinate Mg(2+): serine 172 and threonine 192. Positions lysine 350–aspartate 428 constitute an OCT domain.

Belongs to the TRAFAC class OBG-HflX-like GTPase superfamily. OBG GTPase family. In terms of assembly, monomer. Mg(2+) serves as cofactor.

The protein resides in the cytoplasm. Functionally, an essential GTPase which binds GTP, GDP and possibly (p)ppGpp with moderate affinity, with high nucleotide exchange rates and a fairly low GTP hydrolysis rate. Plays a role in control of the cell cycle, stress response, ribosome biogenesis and in those bacteria that undergo differentiation, in morphogenesis control. In Bacillus cereus (strain ATCC 10987 / NRS 248), this protein is GTPase Obg.